Reading from the N-terminus, the 476-residue chain is Scopoletin glucosyltransferase (476 aa).

His-16 acts as the Proton acceptor in catalysis. Residue His-16 coordinates an anthocyanidin. Asp-119 acts as the Charge relay in catalysis. 7 residues coordinate UDP-alpha-D-glucose: Ala-343, Gln-345, His-360, Trp-363, Asn-364, Ser-365, and Glu-368. Ala-383 contributes to the an anthocyanidin binding site. UDP-alpha-D-glucose contacts are provided by Glu-384 and Gln-385.

The protein belongs to the UDP-glycosyltransferase family.

The catalysed reaction is scopoletin + UDP-alpha-D-glucose = scopolin + UDP + H(+). Its function is as follows. Glucosyltransferase acting preferentially on aromatic substrates of the phenylpropanoid types. The best substrates are scopoletin and esculetin. Required for full resistance to virus. This chain is Scopoletin glucosyltransferase (TOGT1), found in Nicotiana tabacum (Common tobacco).